The sequence spans 325 residues: Dehydrogenase/reductase SDR family member 7B (325 aa).

The Cytoplasmic segment spans residues 1–17 (MISPSSRKGMLKERAMD). A helical; Signal-anchor for type II membrane protein transmembrane segment spans residues 18-38 (LVTQTTILPLLFGCLGIFSLF). Residues 39–325 (RLLQRTRSKA…ARKERKSKNS (287 aa)) lie on the Lumenal side of the membrane. Ser62 and Leu64 together coordinate NAD(+). A substrate-binding site is contributed by Ser194. Residues Tyr207, Lys211, and Thr242 each contribute to the NAD(+) site. Tyr207 functions as the Proton acceptor in the catalytic mechanism.

This sequence belongs to the short-chain dehydrogenases/reductases (SDR) family.

It is found in the endoplasmic reticulum membrane. Functionally, putative oxidoreductase. The protein is Dehydrogenase/reductase SDR family member 7B (Dhrs7b) of Rattus norvegicus (Rat).